A 211-amino-acid polypeptide reads, in one-letter code: UPF0319 protein VC_A0026 (211 aa).

Residues 1-21 form the signal peptide; sequence MKPMQRLTCLLALCFAASASA.

The protein belongs to the UPF0319 family.

The protein is UPF0319 protein VC_A0026 of Vibrio cholerae serotype O1 (strain ATCC 39315 / El Tor Inaba N16961).